We begin with the raw amino-acid sequence, 1229 residues long: Putative cell division cycle ATPase (1229 aa).

Low complexity predominate over residues G252–V267. Residues G252–E315 form a disordered region. Residues P268–N281 are compositionally biased toward basic and acidic residues. A compositionally biased stretch (low complexity) spans N282–N314. G568–T575 is an ATP binding site. Disordered regions lie at residues T814 to D837 and F860 to R892. 2 stretches are compositionally biased toward basic and acidic residues: residues D819–D837 and N882–R892. Position 975 to 982 (G975 to T982) interacts with ATP.

The protein belongs to the AAA ATPase family.

In Plasmodium falciparum (isolate 3D7), this protein is Putative cell division cycle ATPase.